Consider the following 148-residue polypeptide: Protein-export protein SecB (148 aa).

This sequence belongs to the SecB family. As to quaternary structure, homotetramer, a dimer of dimers. One homotetramer interacts with 1 SecA dimer.

It is found in the cytoplasm. Its function is as follows. One of the proteins required for the normal export of preproteins out of the cell cytoplasm. It is a molecular chaperone that binds to a subset of precursor proteins, maintaining them in a translocation-competent state. It also specifically binds to its receptor SecA. This is Protein-export protein SecB from Psychrobacter arcticus (strain DSM 17307 / VKM B-2377 / 273-4).